Here is a 257-residue protein sequence, read N- to C-terminus: Small ribosomal subunit protein uS2 (257 aa).

This sequence belongs to the universal ribosomal protein uS2 family.

This is Small ribosomal subunit protein uS2 from Bartonella henselae (strain ATCC 49882 / DSM 28221 / CCUG 30454 / Houston 1) (Rochalimaea henselae).